The following is a 476-amino-acid chain: Ribulose bisphosphate carboxylase large chain (476 aa).

A propeptide spanning residues 1 to 2 (MS) is cleaved from the precursor. Residue proline 3 is modified to N-acetylproline. The residue at position 14 (lysine 14) is an N6,N6,N6-trimethyllysine. Residues asparagine 123 and threonine 173 each contribute to the substrate site. The Proton acceptor role is filled by lysine 175. Lysine 177 provides a ligand contact to substrate. The Mg(2+) site is built by lysine 201, aspartate 203, and glutamate 204. Lysine 201 carries the post-translational modification N6-carboxylysine. Histidine 294 serves as the catalytic Proton acceptor. Substrate is bound by residues arginine 295, histidine 327, and serine 379.

The protein belongs to the RuBisCO large chain family. Type I subfamily. In terms of assembly, heterohexadecamer of 8 large chains and 8 small chains; disulfide-linked. The disulfide link is formed within the large subunit homodimers. The cofactor is Mg(2+). Post-translationally, the disulfide bond which can form in the large chain dimeric partners within the hexadecamer appears to be associated with oxidative stress and protein turnover.

It is found in the plastid. It localises to the chloroplast. The catalysed reaction is 2 (2R)-3-phosphoglycerate + 2 H(+) = D-ribulose 1,5-bisphosphate + CO2 + H2O. It catalyses the reaction D-ribulose 1,5-bisphosphate + O2 = 2-phosphoglycolate + (2R)-3-phosphoglycerate + 2 H(+). RuBisCO catalyzes two reactions: the carboxylation of D-ribulose 1,5-bisphosphate, the primary event in carbon dioxide fixation, as well as the oxidative fragmentation of the pentose substrate in the photorespiration process. Both reactions occur simultaneously and in competition at the same active site. The polypeptide is Ribulose bisphosphate carboxylase large chain (Brachypodium distachyon (Purple false brome)).